The chain runs to 499 residues: Serine/threonine-protein kinase RHS3 (499 aa).

The interval 1–92 is disordered; sequence MLLKPGNKLV…NSSKPHTGGD (92 aa). The segment covering 39–55 has biased composition (basic and acidic residues); the sequence is QKQVEQNTKKIEEHQIK. Residues 63 to 85 show a composition bias toward low complexity; sequence SNHNVNMSSQSNNSESTSTNNSS. Residues 113–436 enclose the Protein kinase domain; it reads FRVLKRLGYG…ATEIKQHPFF (324 aa). ATP contacts are provided by residues 119 to 127 and K144; that span reads LGYGDIGSV. The Proton acceptor role is filled by D240. Residues 437 to 499 form the AGC-kinase C-terminal domain; it reads EGVNWALIRG…DPDYIVFEYF (63 aa).

The protein belongs to the protein kinase superfamily. AGC Ser/Thr protein kinase family. As to quaternary structure, interacts with PDPK1/PDK1. Autophosphorylated and phosphorylated by PDPK1/PDK1. Specifically expressed in root hair cells.

The catalysed reaction is L-seryl-[protein] + ATP = O-phospho-L-seryl-[protein] + ADP + H(+). It carries out the reaction L-threonyl-[protein] + ATP = O-phospho-L-threonyl-[protein] + ADP + H(+). Its activity is regulated as follows. Activated by PDPK1/PDK1. In terms of biological role, involved in root hair growth and morphogenesis. The protein is Serine/threonine-protein kinase RHS3 of Arabidopsis thaliana (Mouse-ear cress).